Here is a 209-residue protein sequence, read N- to C-terminus: Kynurenine formamidase (209 aa).

Residue Trp-20 participates in substrate binding. Residues His-50, His-54, and Asp-56 each contribute to the Zn(2+) site. The active-site Proton donor/acceptor is His-60. The Zn(2+) site is built by His-161 and Glu-173.

The protein belongs to the Cyclase 1 superfamily. KynB family. Homodimer. The cofactor is Zn(2+).

The enzyme catalyses N-formyl-L-kynurenine + H2O = L-kynurenine + formate + H(+). Its pathway is amino-acid degradation; L-tryptophan degradation via kynurenine pathway; L-kynurenine from L-tryptophan: step 2/2. Its function is as follows. Catalyzes the hydrolysis of N-formyl-L-kynurenine to L-kynurenine, the second step in the kynurenine pathway of tryptophan degradation. This chain is Kynurenine formamidase, found in Bacillus cereus (strain ATCC 14579 / DSM 31 / CCUG 7414 / JCM 2152 / NBRC 15305 / NCIMB 9373 / NCTC 2599 / NRRL B-3711).